Here is a 359-residue protein sequence, read N- to C-terminus: Acidic skeletal organic matrix protein (359 aa).

Residues 1-26 (MLAPRLAFVLLLSSYFGSILITSVES) form the signal peptide. 2 disordered regions span residues 60 to 83 (FEED…EDFD) and 224 to 254 (SEAE…DPNE). Residues 66 to 89 (DDDDEDNEESENEVEDFDDENALS) are a coiled coil.

As to expression, component of the acid-insoluble and acid-soluble organic matrix of the aragonitic skeleton (at protein level).

It localises to the secreted. This chain is Acidic skeletal organic matrix protein, found in Acropora millepora (Staghorn coral).